A 537-amino-acid chain; its full sequence is ATP synthase subunit alpha (537 aa).

171-178 (GDRQTGKT) is an ATP binding site.

Belongs to the ATPase alpha/beta chains family. In terms of assembly, F-type ATPases have 2 components, CF(1) - the catalytic core - and CF(0) - the membrane proton channel. CF(1) has five subunits: alpha(3), beta(3), gamma(1), delta(1), epsilon(1). CF(0) has four main subunits: a, b, b' and c.

It is found in the cell inner membrane. The enzyme catalyses ATP + H2O + 4 H(+)(in) = ADP + phosphate + 5 H(+)(out). Functionally, produces ATP from ADP in the presence of a proton gradient across the membrane. The alpha chain is a regulatory subunit. The polypeptide is ATP synthase subunit alpha (Chloroherpeton thalassium (strain ATCC 35110 / GB-78)).